A 239-amino-acid chain; its full sequence is Ribonuclease 3 (239 aa).

In terms of domain architecture, RNase III spans 12 to 137; that stretch reads RLTLEAAIGH…LIAALYLDGG (126 aa). Residue Glu-50 participates in Mg(2+) binding. Asp-54 is a catalytic residue. 2 residues coordinate Mg(2+): Asp-123 and Glu-126. Glu-126 is a catalytic residue. One can recognise a DRBM domain in the interval 162-231; sequence DAKTELQEWA…ATRILEREGI (70 aa).

Belongs to the ribonuclease III family. Homodimer. It depends on Mg(2+) as a cofactor.

The protein localises to the cytoplasm. The enzyme catalyses Endonucleolytic cleavage to 5'-phosphomonoester.. Functionally, digests double-stranded RNA. Involved in the processing of primary rRNA transcript to yield the immediate precursors to the large and small rRNAs (23S and 16S). Processes some mRNAs, and tRNAs when they are encoded in the rRNA operon. Processes pre-crRNA and tracrRNA of type II CRISPR loci if present in the organism. The chain is Ribonuclease 3 from Rhizobium rhizogenes (strain K84 / ATCC BAA-868) (Agrobacterium radiobacter).